The chain runs to 445 residues: 3-phosphoshikimate 1-carboxyvinyltransferase (445 aa).

3-phosphoshikimate is bound by residues lysine 25, serine 26, and arginine 30. Lysine 25 contacts phosphoenolpyruvate. 2 residues coordinate phosphoenolpyruvate: glycine 98 and arginine 126. Residues serine 171, glutamine 173, aspartate 324, and lysine 351 each contribute to the 3-phosphoshikimate site. Glutamine 173 contributes to the phosphoenolpyruvate binding site. Residue aspartate 324 is the Proton acceptor of the active site. The phosphoenolpyruvate site is built by arginine 355 and arginine 398.

The protein belongs to the EPSP synthase family. As to quaternary structure, monomer.

It localises to the cytoplasm. It catalyses the reaction 3-phosphoshikimate + phosphoenolpyruvate = 5-O-(1-carboxyvinyl)-3-phosphoshikimate + phosphate. The protein operates within metabolic intermediate biosynthesis; chorismate biosynthesis; chorismate from D-erythrose 4-phosphate and phosphoenolpyruvate: step 6/7. In terms of biological role, catalyzes the transfer of the enolpyruvyl moiety of phosphoenolpyruvate (PEP) to the 5-hydroxyl of shikimate-3-phosphate (S3P) to produce enolpyruvyl shikimate-3-phosphate and inorganic phosphate. The sequence is that of 3-phosphoshikimate 1-carboxyvinyltransferase from Hydrogenovibrio crunogenus (strain DSM 25203 / XCL-2) (Thiomicrospira crunogena).